Consider the following 380-residue polypeptide: Guanine nucleotide-binding protein subunit beta (380 aa).

7 WD repeats span residues 64–94 (GHSGKVYSLDWTPEKNWIVSASQDGRLIVWN), 106–136 (LHCPWVMACAFAPNGQSVACGGLDSACSIFN), 155–186 (GHKGYVSSCQYVPDQETRLITSSGDQTCVLWD), 203–234 (GHTADVQSVSINSSNTNMFVSGSCDTTVRLWD), 247–277 (GHEDDVNSVKFFPDGHRFGTGSDDGTCRLFD), 296–326 (NELPTVTSIAFSISGRLLFAGYSNGDCYVWD), and 342–372 (SHDGRISCLGMSSDGSALCTGSWDKNLKIWA).

The protein belongs to the WD repeat G protein beta family. In terms of assembly, g proteins are composed of 3 units, alpha, beta and gamma. In terms of tissue distribution, present in the root, leaf and tassel.

Functionally, guanine nucleotide-binding proteins (G proteins) are involved as a modulator or transducer in various transmembrane signaling systems. The beta and gamma chains are required for the GTPase activity, for replacement of GDP by GTP, and for G protein-effector interaction. This chain is Guanine nucleotide-binding protein subunit beta (GB1), found in Zea mays (Maize).